We begin with the raw amino-acid sequence, 1252 residues long: ABC transporter B family member 19 (1252 aa).

Asparagine 5 is a glycosylation site (N-linked (GlcNAc...) asparagine). An ABC transmembrane type-1 1 domain is found at 41–330; the sequence is MFVGSLGAIV…SFSNLGAFSK (290 aa). The next 2 membrane-spanning stretches (helical) occupy residues 42–62 and 88–108; these read FVGS…FLLF and LYFV…IACW. Aspartate 136 is a binding site for ATP. The next 4 helical transmembrane spans lie at 163 to 183, 187 to 207, 274 to 294, and 308 to 328; these read VGNF…GFVS, LALL…LYAY, CTYG…GVFI, and IFSA…LGAF. 2 residues coordinate brassinolide: tyrosine 276 and tryptophan 283. An ABC transporter 1 domain is found at 365–601; that stretch reads IEFKDVTFSY…SGAYASLIRF (237 aa). Residues tyrosine 374, serine 376, glycine 405, lysine 406, serine 407, threonine 408, and glutamate 529 each contribute to the ATP site. N-linked (GlcNAc...) asparagine glycosylation is present at asparagine 641. One can recognise an ABC transmembrane type-1 2 domain in the interval 687–975; it reads SIMGAVGSIL…TVSLAPEIIR (289 aa). A run of 2 helical transmembrane segments spans residues 688–708 and 732–752; these read IMGA…AIVM and FIYI…HYFF. Asparagine 758 carries N-linked (GlcNAc...) asparagine glycosylation. Aspartate 780 contacts ATP. Residues asparagine 785 and asparagine 814 are each glycosylated (N-linked (GlcNAc...) asparagine). 3 helical membrane passes run 822–842, 914–934, and 949–969; these read FIVA…TFPL, GFLF…ILWY, and VIKV…TVSL. Residues 965–1252 form an interaction with FKBP42/TWD1 region; sequence ETVSLAPEII…RLLQLQTHRI (288 aa). The ABC transporter 2 domain maps to 1010-1246; the sequence is IEFRHVDFAY…PEGAYSRLLQ (237 aa). ATP contacts are provided by tyrosine 1019, serine 1021, arginine 1022, lysine 1051, serine 1052, and serine 1053.

Belongs to the ABC transporter superfamily. ABCB family. Multidrug resistance exporter (TC 3.A.1.201) subfamily. In terms of assembly, interacts with 1-naphthylphthalamic acid (NPA), and FKBP42/TWD1. Phosphorylated by PHOT1 in phototropic seedlings, to modulates auxin export and distribution and regulates leaf and petiole curling. In terms of tissue distribution, ubiquitous, mostly in shoot meristems. Present in the majority of stem cells, predominantly in a non-polar manner. Accumulates in seedlings roots and hypocotyls, and in roots apices and inflorescences.

The protein resides in the cell membrane. The enzyme catalyses (indol-3-yl)acetate(in) + ATP + H2O = (indol-3-yl)acetate(out) + ADP + phosphate + H(+). It catalyses the reaction brassinolide(in) + ATP + H2O = brassinolide(out) + ADP + phosphate + H(+). It carries out the reaction 24-epi-brassinolide(in) + ATP + H2O = 24-epi-brassinolide(out) + ADP + phosphate + H(+). The catalysed reaction is 24-epi-castasterone(in) + ATP + H2O = 24-epi-castasterone(out) + ADP + phosphate + H(+). The enzyme catalyses castasterone(in) + ATP + H2O = castasterone(out) + ADP + phosphate + H(+). Transport capacity is stimulated by the chaperone protein FKBP42/TWD1. ATPase activity is specifically activated by bioactive brassinosteroids in a dose-dependent manner, including brassinolide (BL), 24-epiBL and 24-epicastasterone (24-epiCS). Inhibited by vanadate. Brassinosteroid exporter that, in conjunction with ABCB1, supports the accumulation of exogenous brassinosteroids (BR) in the apoplast, thus promoting BR signaling initiation involving the specific receptor BRI1 and required for plant growth and stress responses. Mediates the transport of castasterone (CSA) and brassinolide (BL) across the plasma membrane. Auxin efflux transporter that acts as a negative regulator of light signaling to promote hypocotyl elongation by mediating leaf tip to petiole auxin flux. Required for the regulation of leaf position and morphology during PHOT1-mediated blue light responses involving auxin distribution, especially in low light fluence. Together with ABCB1 and in a FKBP42/TWD1-dependent manner, supports seed development by promoting stamen elongation and, to a lesser extent, anther dehiscence and pollen maturation, probably as auxin transporters. Contributes to the connective auxin transport (CAT) that ensures communication across the shoot system, including auxin loading at axillary bud apices to influence strigolactone-mediated bud outgrowth responses and shoot branching control. Mediates the accumulation of chlorophyll and anthocyanin, as well as the expression of genes in response to light. Participates in auxin efflux and thus regulates the polar auxin basipetal transport (from auxin-producing leaves to auxin-sensitive tissues, and from root tips to root elongating zone). Involved in diverse auxin-mediated responses including gravitropism, phototropism and lateral root formation. Required for the regulation of organ bending, such as gravitropic root bending. In Arabidopsis thaliana (Mouse-ear cress), this protein is ABC transporter B family member 19.